A 656-amino-acid chain; its full sequence is Protein EMBRYO SAC DEVELOPMENT ARREST 30 (656 aa).

Residues 9–29 form a helical; Signal-anchor for type II membrane protein membrane-spanning segment; that stretch reads WIALFVLILSMGSLVVHLSMT. N-linked (GlcNAc...) asparagine glycosylation is present at Asn119. The disordered stretch occupies residues 381–426; sequence LSELVGPETPLPENTYKMPPRKSDKQLKEEWNKAGPRPRPLPPPPD. Residues 401 to 412 are compositionally biased toward basic and acidic residues; that stretch reads RKSDKQLKEEWN. Positions 417-426 are enriched in pro residues; that stretch reads RPRPLPPPPD. Asn444, Asn522, Asn534, and Asn544 each carry an N-linked (GlcNAc...) asparagine glycan. The interval 631–656 is disordered; the sequence is SETEEEFAKSKVASAFDQDEEWDPND. Acidic residues predominate over residues 647 to 656; that stretch reads DQDEEWDPND.

It belongs to the glycosyltransferase GT106 family.

The protein resides in the membrane. It participates in glycan metabolism. In Arabidopsis thaliana (Mouse-ear cress), this protein is Protein EMBRYO SAC DEVELOPMENT ARREST 30.